Reading from the N-terminus, the 54-residue chain is Ovomucoid (54 aa).

Residues Val-4–Cys-54 form the Kazal-like domain. Disulfide bonds link Cys-6–Cys-36, Cys-14–Cys-33, and Cys-22–Cys-54. Asn-43 is a glycosylation site (N-linked (GlcNAc...) asparagine).

It localises to the secreted. The protein is Ovomucoid of Aepypodius arfakianus (Wattled brush turkey).